Consider the following 770-residue polypeptide: Probable copper-exporting P-type ATPase V (770 aa).

One can recognise an HMA domain in the interval 1–66 (MRVCVTGFNV…AITKAQHVPA (66 aa)). The disordered stretch occupies residues 103 to 130 (DKPLKASRCGGRPRGPVRGSASWPGEQN). A compositionally biased stretch (low complexity) spans 110 to 121 (RCGGRPRGPVRG). The next 6 membrane-spanning stretches (helical) occupy residues 141-161 (VWLA…FGAY), 164-184 (AGWL…WPIL), 193-213 (ALTS…FVYS), 217-237 (LFAG…FVVL), 377-397 (AVFV…WTLI), and 402-422 (VAGM…ALGL). Asp-460 serves as the catalytic 4-aspartylphosphate intermediate. Mg(2+) contacts are provided by Asp-660 and Asp-664. Transmembrane regions (helical) follow at residues 718-737 (LGWA…LGAL) and 741-760 (VAGA…SLRL).

Belongs to the cation transport ATPase (P-type) (TC 3.A.3) family. Type IB subfamily.

The protein resides in the cell membrane. It carries out the reaction Cu(+)(in) + ATP + H2O = Cu(+)(out) + ADP + phosphate + H(+). In terms of biological role, necessary for copper homeostasis and likely functions as a copper exporter. Also required for full virulence. In Mycobacterium tuberculosis (strain CDC 1551 / Oshkosh), this protein is Probable copper-exporting P-type ATPase V (ctpV).